Consider the following 486-residue polypeptide: Cardiolipin synthase A (486 aa).

2 consecutive transmembrane segments (helical) span residues 3–23 (TFYTVLSWLTFFFYWLLIAGV) and 38–58 (MTWLLIIYILPLVGVIAYFAF). PLD phosphodiesterase domains are found at residues 219–246 (MDLRQHRKIVLIDNYISYTGSMNMVDPR) and 399–426 (EDGLLHTKSVMVDGQLSMVGSVNLDMRS). Catalysis depends on residues His224, Lys226, Asp231, His404, Lys406, and Asp411.

Belongs to the phospholipase D family. Cardiolipin synthase subfamily. ClsA sub-subfamily.

The protein resides in the cell inner membrane. The enzyme catalyses 2 a 1,2-diacyl-sn-glycero-3-phospho-(1'-sn-glycerol) = a cardiolipin + glycerol. Catalyzes the reversible phosphatidyl group transfer from one phosphatidylglycerol molecule to another to form cardiolipin (CL) (diphosphatidylglycerol) and glycerol. This Proteus mirabilis (strain HI4320) protein is Cardiolipin synthase A.